A 156-amino-acid polypeptide reads, in one-letter code: Small ribosomal subunit protein uS7 (156 aa).

Belongs to the universal ribosomal protein uS7 family. In terms of assembly, part of the 30S ribosomal subunit. Contacts proteins S9 and S11.

In terms of biological role, one of the primary rRNA binding proteins, it binds directly to 16S rRNA where it nucleates assembly of the head domain of the 30S subunit. Is located at the subunit interface close to the decoding center, probably blocks exit of the E-site tRNA. In Mycobacterium sp. (strain JLS), this protein is Small ribosomal subunit protein uS7.